The primary structure comprises 303 residues: Acetaldehyde dehydrogenase (303 aa).

The active-site Acyl-thioester intermediate is Cys-131. NAD(+)-binding positions include 162–170 (SVGPGTRAN) and Asn-273.

Belongs to the acetaldehyde dehydrogenase family.

It carries out the reaction acetaldehyde + NAD(+) + CoA = acetyl-CoA + NADH + H(+). In Marinomonas sp. (strain MWYL1), this protein is Acetaldehyde dehydrogenase.